A 178-amino-acid polypeptide reads, in one-letter code: Large ribosomal subunit protein uL5 (178 aa).

This sequence belongs to the universal ribosomal protein uL5 family. In terms of assembly, part of the 50S ribosomal subunit; part of the 5S rRNA/L5/L18/L25 subcomplex. Contacts the 5S rRNA and the P site tRNA. Forms a bridge to the 30S subunit in the 70S ribosome.

This is one of the proteins that bind and probably mediate the attachment of the 5S RNA into the large ribosomal subunit, where it forms part of the central protuberance. In the 70S ribosome it contacts protein S13 of the 30S subunit (bridge B1b), connecting the 2 subunits; this bridge is implicated in subunit movement. Contacts the P site tRNA; the 5S rRNA and some of its associated proteins might help stabilize positioning of ribosome-bound tRNAs. This is Large ribosomal subunit protein uL5 from Syntrophomonas wolfei subsp. wolfei (strain DSM 2245B / Goettingen).